The following is a 54-amino-acid chain: Large ribosomal subunit protein bL33C (54 aa).

This sequence belongs to the bacterial ribosomal protein bL33 family.

This is Large ribosomal subunit protein bL33C (rpmG3) from Streptomyces coelicolor (strain ATCC BAA-471 / A3(2) / M145).